The sequence spans 967 residues: Importin-alpha re-exporter (967 aa).

The Importin N-terminal domain occupies 20–95 (AEEALKVWEL…KREIINLMLK (76 aa)).

This sequence belongs to the XPO2/CSE1 family. In terms of assembly, binds with high affinity to importin-alpha only in the presence of RanGTP.

Its subcellular location is the cytoplasm. The protein localises to the nucleus envelope. Export receptor for importin alpha. Mediates importin-alpha re-export from the nucleus to the cytoplasm after import substrates have been released into the nucleoplasm. This Schizosaccharomyces pombe (strain 972 / ATCC 24843) (Fission yeast) protein is Importin-alpha re-exporter (kap109).